The chain runs to 200 residues: Probable GTP-binding protein EngB (200 aa).

The EngB-type G domain maps to 26–200 (SIPEVALAGR…IYEIAQCIKK (175 aa)). Residues 34–41 (GRSNVGKS), 61–65 (GCTRQ), 80–83 (DLPG), 147–150 (TKID), and 179–181 (VSS) contribute to the GTP site. Mg(2+) contacts are provided by S41 and T63.

The protein belongs to the TRAFAC class TrmE-Era-EngA-EngB-Septin-like GTPase superfamily. EngB GTPase family. Requires Mg(2+) as cofactor.

In terms of biological role, necessary for normal cell division and for the maintenance of normal septation. The chain is Probable GTP-binding protein EngB from Ehrlichia ruminantium (strain Gardel).